The following is a 133-amino-acid chain: NADPH-dependent 7-cyano-7-deazaguanine reductase (133 aa).

C46 serves as the catalytic Thioimide intermediate. D53 acts as the Proton donor in catalysis. Residues 68–70 (VEL) and 87–88 (HE) each bind substrate.

It belongs to the GTP cyclohydrolase I family. QueF type 1 subfamily.

Its subcellular location is the cytoplasm. The catalysed reaction is 7-aminomethyl-7-carbaguanine + 2 NADP(+) = 7-cyano-7-deazaguanine + 2 NADPH + 3 H(+). Its pathway is tRNA modification; tRNA-queuosine biosynthesis. Catalyzes the NADPH-dependent reduction of 7-cyano-7-deazaguanine (preQ0) to 7-aminomethyl-7-deazaguanine (preQ1). In Parasynechococcus marenigrum (strain WH8102), this protein is NADPH-dependent 7-cyano-7-deazaguanine reductase.